The primary structure comprises 1706 residues: Histone acetyltransferase HAC12 (1706 aa).

4 disordered regions span residues 1 to 33, 251 to 284, 397 to 456, and 524 to 543; these read MNVQ…MQNL, TNNN…NSHM, VSRV…LGKT, and QNSQ…SDSS. The span at 397–406 shows a compositional bias: polar residues; it reads VSRVNSSLSH. Low complexity predominate over residues 407-434; that stretch reads QQQFQQPPNRFQQQPNQIQQQQQQFLNQ. A TAZ-type 1 zinc finger spans residues 637–716; the sequence is HDPKFKNQQR…DPRCPVCVPV (80 aa). The tract at residues 791-909 is disordered; that stretch reads TESCKSSIVS…PELTSKSRKP (119 aa). Positions 794–805 are enriched in polar residues; sequence CKSSIVSTTEAD. Composition is skewed to basic and acidic residues over residues 809–829 and 870–896; these read DAER…KVEI and PKQE…KEEL. The PHD-type zinc-finger motif lies at 998–1075; it reads HYFCIPCYNE…EYTCPYCYVI (78 aa). The CBP/p300-type HAT domain maps to 1090–1526; the sequence is VLGAKDLPRT…VLYHLHNPTA (437 aa). Residues 1213–1215, 1232–1233, and W1288 each bind acetyl-CoA; these read LDS and RT. 2 consecutive ZZ-type zinc fingers follow at residues 1408-1471 and 1528-1581; these read HLQH…IADI and AFVT…SLAD. Residues C1413, C1416, C1428, C1431, C1437, C1440, H1453, H1461, C1533, C1536, C1548, C1551, C1557, C1560, H1569, and H1571 each coordinate Zn(2+). The TAZ-type 2 zinc finger occupies 1588–1671; sequence EARQLRVLQL…ECDVPRCGDL (84 aa).

The protein resides in the nucleus. The enzyme catalyses L-lysyl-[protein] + acetyl-CoA = N(6)-acetyl-L-lysyl-[protein] + CoA + H(+). Its function is as follows. Acetyltransferase enzyme. Acetylates histones, giving a specific tag for transcriptional activation. The sequence is that of Histone acetyltransferase HAC12 (HAC12) from Arabidopsis thaliana (Mouse-ear cress).